The primary structure comprises 102 residues: Small ribosomal subunit protein uS10 (102 aa).

The protein belongs to the universal ribosomal protein uS10 family. In terms of assembly, part of the 30S ribosomal subunit.

Functionally, involved in the binding of tRNA to the ribosomes. This chain is Small ribosomal subunit protein uS10, found in Streptococcus pyogenes serotype M3 (strain SSI-1).